The sequence spans 400 residues: Enoyl-[acyl-carrier-protein] reductase [NADH] (400 aa).

NAD(+) is bound by residues 48-53 (GSSSGY), 74-75 (FE), 111-112 (DA), and 139-140 (LA). Residue Y225 coordinates substrate. Y235 serves as the catalytic Proton donor. Residues K244 and 273–275 (VVT) each bind NAD(+).

This sequence belongs to the TER reductase family. Monomer.

It carries out the reaction a 2,3-saturated acyl-[ACP] + NAD(+) = a (2E)-enoyl-[ACP] + NADH + H(+). Its pathway is lipid metabolism; fatty acid biosynthesis. Functionally, involved in the final reduction of the elongation cycle of fatty acid synthesis (FAS II). Catalyzes the reduction of a carbon-carbon double bond in an enoyl moiety that is covalently linked to an acyl carrier protein (ACP). This Shewanella denitrificans (strain OS217 / ATCC BAA-1090 / DSM 15013) protein is Enoyl-[acyl-carrier-protein] reductase [NADH].